Consider the following 785-residue polypeptide: DNA ligase (785 aa).

NAD(+)-binding positions include 32–36 (DAEYD), 81–82 (SL), and Glu-121. Lys-123 serves as the catalytic N6-AMP-lysine intermediate. The NAD(+) site is built by Arg-144, Glu-181, Lys-297, and Lys-321. Cys-415, Cys-418, Cys-445, and Cys-451 together coordinate Zn(2+). The 84-residue stretch at 702–785 (VEGLPLAGET…AFLKGHGISA (84 aa)) folds into the BRCT domain.

This sequence belongs to the NAD-dependent DNA ligase family. LigA subfamily. It depends on Mg(2+) as a cofactor. Mn(2+) serves as cofactor.

It carries out the reaction NAD(+) + (deoxyribonucleotide)n-3'-hydroxyl + 5'-phospho-(deoxyribonucleotide)m = (deoxyribonucleotide)n+m + AMP + beta-nicotinamide D-nucleotide.. Its function is as follows. DNA ligase that catalyzes the formation of phosphodiester linkages between 5'-phosphoryl and 3'-hydroxyl groups in double-stranded DNA using NAD as a coenzyme and as the energy source for the reaction. It is essential for DNA replication and repair of damaged DNA. The sequence is that of DNA ligase from Pseudomonas fluorescens (strain Pf0-1).